The chain runs to 1181 residues: Lysine-specific demethylase hairless (1181 aa).

Pro residues predominate over residues 311–323; the sequence is TPRCPSPGPPTPP. Disordered regions lie at residues 311 to 378, 413 to 472, and 509 to 543; these read TPRC…HTKL, AGSP…DGRI, and SHSQ…PEAS. A compositionally biased stretch (low complexity) spans 347–357; that stretch reads SPEGSSSGPGE. Positions 447–461 are enriched in polar residues; sequence TPETSTGSKAEAQQQ. A compositionally biased stretch (basic and acidic residues) spans 462 to 472; sequence EEQRGPRDGRI. The short motif at 560 to 564 is the LXXLL motif 1 element; the sequence is LCRLL. The C6-type zinc-finger motif lies at 594–619; the sequence is CSRCHHGLFNTHWRCSHCSHRLCVAC. Residues 696 to 745 form a disordered region; sequence GDGGQQKEPTEKTPPAPQLSCNGDSNRTKDIKEETPDSTESPAEDRAGRS. Over residues 721-730 the composition is skewed to basic and acidic residues; it reads NRTKDIKEET. Residues 752–756 carry the LXXLL motif 2 motif; sequence LCELL. The 212-residue stretch at 938-1149 folds into the JmjC domain; the sequence is DESRVENLAS…LSAQLCHQGA (212 aa). 3 residues coordinate Fe cation: Cys999, Glu1001, and His1117.

It depends on Fe(2+) as a cofactor.

It localises to the nucleus. It carries out the reaction N(6),N(6)-dimethyl-L-lysyl(9)-[histone H3] + 2 2-oxoglutarate + 2 O2 = L-lysyl(9)-[histone H3] + 2 formaldehyde + 2 succinate + 2 CO2. Histone demethylase that specifically demethylates both mono- and dimethylated 'Lys-9' of histone H3. May act as a transcription regulator controlling hair biology (via targeting of collagens), neural activity, and cell cycle. The polypeptide is Lysine-specific demethylase hairless (Hr) (Rattus norvegicus (Rat)).